The sequence spans 513 residues: Zinc finger protein 395 (513 aa).

The span at 17–29 shows a compositional bias: low complexity; it reads ARVLGPSASEGPS. A disordered region spans residues 17–56; sequence ARVLGPSASEGPSAAPPSEPLLEGAAPQPFTTSDDTPCQE. The span at 45-55 shows a compositional bias: polar residues; sequence PFTTSDDTPCQ. Residues 165 to 174 carry the Nuclear export signal motif; sequence MDEMMAAMVL. The disordered stretch occupies residues 204 to 269; the sequence is KESGDISDSG…DPFLLDEPAP (66 aa). The span at 209-229 shows a compositional bias: low complexity; sequence ISDSGSSTTSGHWSGSSGVST. A Phosphoserine modification is found at serine 248. The segment at 280-305 adopts a C2H2-type zinc-finger fold; sequence YKCLWPNCGKVLRSIVGIKRHVKALH. Positions 335-394 are disordered; it reads AAAAAAAGTPVPGTPTSEPAPTPSMTGLPLSALPPPLHKAQSSGPEHPGPESSLPSGALS. Residues 348–359 show a composition bias toward polar residues; sequence TPTSEPAPTPSM. Phosphoserine is present on residues serine 376 and serine 449. The span at 376–391 shows a compositional bias: low complexity; sequence SSGPEHPGPESSLPSG.

As to quaternary structure, interacts with repression-mediating E2 binding site P2 of human papillomavirus type 8 (HPV8). Widely expressed.

Its subcellular location is the cytoplasm. It localises to the nucleus. Plays a role in papillomavirus genes transcription. This chain is Zinc finger protein 395 (ZNF395), found in Homo sapiens (Human).